Consider the following 376-residue polypeptide: Chaperone protein DnaJ (376 aa).

The region spanning 5–70 is the J domain; the sequence is DYYEILGVSK…QKRAAYDQYG (66 aa). The CR-type zinc finger occupies 131-209; that stretch reads GVTKEIRIPT…CHGHGRVERS (79 aa). Zn(2+)-binding residues include Cys-144, Cys-147, Cys-161, Cys-164, Cys-183, Cys-186, Cys-197, and Cys-200. CXXCXGXG motif repeat units follow at residues 144 to 151, 161 to 168, 183 to 190, and 197 to 204; these read CDVCHGSG, CPTCHGSG, CPHCQGRG, and CNKCHGHG.

It belongs to the DnaJ family. As to quaternary structure, homodimer. Zn(2+) is required as a cofactor.

The protein resides in the cytoplasm. In terms of biological role, participates actively in the response to hyperosmotic and heat shock by preventing the aggregation of stress-denatured proteins and by disaggregating proteins, also in an autonomous, DnaK-independent fashion. Unfolded proteins bind initially to DnaJ; upon interaction with the DnaJ-bound protein, DnaK hydrolyzes its bound ATP, resulting in the formation of a stable complex. GrpE releases ADP from DnaK; ATP binding to DnaK triggers the release of the substrate protein, thus completing the reaction cycle. Several rounds of ATP-dependent interactions between DnaJ, DnaK and GrpE are required for fully efficient folding. Also involved, together with DnaK and GrpE, in the DNA replication of plasmids through activation of initiation proteins. This chain is Chaperone protein DnaJ, found in Shigella flexneri serotype 5b (strain 8401).